The following is a 101-amino-acid chain: Small ribosomal subunit protein uS14 (101 aa).

Belongs to the universal ribosomal protein uS14 family. In terms of assembly, part of the 30S ribosomal subunit. Contacts proteins S3 and S10.

Binds 16S rRNA, required for the assembly of 30S particles and may also be responsible for determining the conformation of the 16S rRNA at the A site. The protein is Small ribosomal subunit protein uS14 of Cellvibrio japonicus (strain Ueda107) (Pseudomonas fluorescens subsp. cellulosa).